We begin with the raw amino-acid sequence, 506 residues long: Trans-cinnamate 4-monooxygenase (506 aa).

Residues 3–23 traverse the membrane as a helical segment; sequence LLLLEKALLGLFAAAVVAIAV. (E)-cinnamate is bound by residues 213-218 and A306; that span reads RSRLAQ. A heme-binding site is contributed by C447.

It belongs to the cytochrome P450 family. The cofactor is heme.

It localises to the membrane. The enzyme catalyses (E)-cinnamate + reduced [NADPH--hemoprotein reductase] + O2 = (E)-4-coumarate + oxidized [NADPH--hemoprotein reductase] + H2O + H(+). It functions in the pathway phenylpropanoid metabolism; trans-4-coumarate biosynthesis; trans-4-coumarate from trans-cinnamate: step 1/1. In terms of biological role, catalyzes the first oxidative step of the phenylpropanoid pathway in higher plants by transforming trans-cinnamate into p-coumarate. The compounds formed by this pathway are essential components for lignification, pollination, and defense against ultraviolet light, predators and pathogens. The chain is Trans-cinnamate 4-monooxygenase (CYP73A2) from Ruta graveolens (Common rue).